A 361-amino-acid polypeptide reads, in one-letter code: Phospho-N-acetylmuramoyl-pentapeptide-transferase (361 aa).

10 helical membrane passes run 28–48 (LAIIITLSLSFITGPILIKFL), 74–94 (TMGGIMIILSSCLSTLLLADL), 99–119 (TWITLFGFISFGIIGFMDDYA), 133–153 (SKLLLQGIISFIICVLLEYLD), 168–188 (LSLDLGYFYIVFAIFVIVGSS), 203–223 (VPIAFTAGSFALISYLVGNLI), 236–256 (TGELTVLCAGLVGSCLGFLWF), 263–283 (VFMGDTGSLSLGGVLGIISVI), 288–308 (IVLAIVGGLFVIETASVILQV), and 338–358 (KVVIRFWIISVIFALIGLSSL).

The protein belongs to the glycosyltransferase 4 family. MraY subfamily. The cofactor is Mg(2+).

It is found in the cell inner membrane. It carries out the reaction UDP-N-acetyl-alpha-D-muramoyl-L-alanyl-gamma-D-glutamyl-meso-2,6-diaminopimeloyl-D-alanyl-D-alanine + di-trans,octa-cis-undecaprenyl phosphate = di-trans,octa-cis-undecaprenyl diphospho-N-acetyl-alpha-D-muramoyl-L-alanyl-D-glutamyl-meso-2,6-diaminopimeloyl-D-alanyl-D-alanine + UMP. It participates in cell wall biogenesis; peptidoglycan biosynthesis. Catalyzes the initial step of the lipid cycle reactions in the biosynthesis of the cell wall peptidoglycan: transfers peptidoglycan precursor phospho-MurNAc-pentapeptide from UDP-MurNAc-pentapeptide onto the lipid carrier undecaprenyl phosphate, yielding undecaprenyl-pyrophosphoryl-MurNAc-pentapeptide, known as lipid I. This Rickettsia massiliae (strain Mtu5) protein is Phospho-N-acetylmuramoyl-pentapeptide-transferase.